The primary structure comprises 309 residues: E3 ubiquitin-protein ligase SINAT5 (309 aa).

The RING-type zinc-finger motif lies at 46–82; it reads CPVCTNSMYPPIHQCHNGHTLCSTCKSRVHNRCPTCR. Residues 96 to 289 are SBD; it reads VAESLELPCK…KELKLRVTGR (194 aa). Residues 99–159 form an SIAH-type zinc finger; that stretch reads SLELPCKYYN…LVAHLRDDHK (61 aa). Residues Cys104, Cys111, His123, Cys127, Cys134, Cys141, His153, and His158 each coordinate Zn(2+).

It belongs to the SINA (Seven in absentia) family. In terms of assembly, homodimer; homodimerization is essential for its function. Interacts with UBC28 and NAC021/NAC022. Interacts with SINAT6. Interacts with ATG6 and TRAF1A. Interacts with WAV3. Interacts with FREE1. In terms of tissue distribution, expressed at low level in the vascular tissue of mature roots. Expressed in lateral roots and in elongation zone of the main root upon stimulation by auxin. Colocalizes with NAC021/NAC022.

It is found in the nucleus. It localises to the cytoplasm. The catalysed reaction is S-ubiquitinyl-[E2 ubiquitin-conjugating enzyme]-L-cysteine + [acceptor protein]-L-lysine = [E2 ubiquitin-conjugating enzyme]-L-cysteine + N(6)-ubiquitinyl-[acceptor protein]-L-lysine.. It participates in protein modification; protein ubiquitination. In terms of biological role, E3 ubiquitin-protein ligase that mediates ubiquitination and subsequent proteasomal degradation of target proteins. E3 ubiquitin ligases accept ubiquitin from an E2 ubiquitin-conjugating enzyme in the form of a thioester and then directly transfers the ubiquitin to targeted substrates. Mediates the ubiquitination and proteasomal-dependent degradation of NAC021/NAC022, a transcription activator that functions downstream of the auxin signals, thereby acting as a down-regulator of auxin signals. Involved in the formation of lateral roots. Is antagonist to SINAT1, SINAT2, SINAT3 and SINAT4 by suppressing FREE1 ubiquitination and degradation mediated by SINAT1, SINAT2, SINAT3 and SINAT4, and promoting FREE1 accumulation. This Arabidopsis thaliana (Mouse-ear cress) protein is E3 ubiquitin-protein ligase SINAT5.